The sequence spans 73 residues: Sodium channel neurotoxin MeuNaTxalpha-13 (73 aa).

The N-terminal stretch at 1–5 is a signal peptide; sequence TGVES. Positions 7 to 71 constitute an LCN-type CS-alpha/beta domain; sequence RDAYIAKPHN…VPIRIPGKCH (65 aa). Intrachain disulfides connect Cys17–Cys70, Cys21–Cys43, Cys29–Cys53, and Cys33–Cys55. Positions 72–73 are cleaved as a propeptide — removed by a carboxypeptidase; the sequence is RR.

It belongs to the long (4 C-C) scorpion toxin superfamily. Sodium channel inhibitor family. Alpha subfamily. As to expression, expressed by the venom gland.

The protein localises to the secreted. Alpha toxins bind voltage-independently at site-3 of sodium channels (Nav) and inhibit the inactivation of the activated channels, thereby blocking neuronal transmission. The polypeptide is Sodium channel neurotoxin MeuNaTxalpha-13 (Mesobuthus eupeus (Lesser Asian scorpion)).